The following is a 347-amino-acid chain: NADH-ubiquinone oxidoreductase chain 2 (347 aa).

10 helical membrane-spanning segments follow: residues 3-23 (PIIL…TMIS), 25-45 (HWLL…PILM), 59-79 (YFLT…INTA), 96-116 (LVTM…FWVP), 127-147 (GMLL…QIFP), 150-170 (NPNI…WGGL), 193-213 (ILMY…MLTI), 240-260 (ITLT…LTGF), 274-294 (SNIM…YFYM), and 323-343 (IFLL…SPAL).

Belongs to the complex I subunit 2 family. In terms of assembly, core subunit of respiratory chain NADH dehydrogenase (Complex I) which is composed of 45 different subunits. Interacts with TMEM242.

Its subcellular location is the mitochondrion inner membrane. The catalysed reaction is a ubiquinone + NADH + 5 H(+)(in) = a ubiquinol + NAD(+) + 4 H(+)(out). Core subunit of the mitochondrial membrane respiratory chain NADH dehydrogenase (Complex I) which catalyzes electron transfer from NADH through the respiratory chain, using ubiquinone as an electron acceptor. Essential for the catalytic activity and assembly of complex I. The chain is NADH-ubiquinone oxidoreductase chain 2 from Lemur catta (Ring-tailed lemur).